The chain runs to 115 residues: Large ribosomal subunit protein bL20 (115 aa).

This sequence belongs to the bacterial ribosomal protein bL20 family.

Functionally, binds directly to 23S ribosomal RNA and is necessary for the in vitro assembly process of the 50S ribosomal subunit. It is not involved in the protein synthesizing functions of that subunit. The chain is Large ribosomal subunit protein bL20 from Synechococcus sp. (strain CC9605).